A 201-amino-acid chain; its full sequence is Recombination protein RecR (201 aa).

A C4-type zinc finger spans residues 57 to 72; sequence CRDCRTFTEQEVCTIC. Residues 81-176 form the Toprim domain; the sequence is GQICVVESPA…LASRIAHGVP (96 aa).

The protein belongs to the RecR family.

Its function is as follows. May play a role in DNA repair. It seems to be involved in an RecBC-independent recombinational process of DNA repair. It may act with RecF and RecO. This chain is Recombination protein RecR, found in Edwardsiella ictaluri (strain 93-146).